A 581-amino-acid chain; its full sequence is Probable hexosyltransferase MUCI70 (581 aa).

The Cytoplasmic portion of the chain corresponds to 1 to 58 (MTGLGVRSSSYGSLEKTGLNGVVLPIQITTTTRTKPSKMQKDREGIVHWICKFAGRKK). Residues 59–79 (VGMLLLFLISAVVFLRVLYVG) traverse the membrane as a helical; Signal-anchor for type II membrane protein segment. Residues 80-581 (KGEDSQEGQG…NLPVRLPDSA (502 aa)) lie on the Lumenal side of the membrane. N-linked (GlcNAc...) asparagine glycosylation is found at N96, N102, N119, N194, N224, N285, N382, N411, and N488. A disordered region spans residues 514 to 581 (RFARQRPPVP…NLPVRLPDSA (68 aa)). Over residues 520–536 (PPVPNFPPPPPSPPPPV) the composition is skewed to pro residues. Positions 553-571 (PPRRRGRDRRSGQRGHRKA) are enriched in basic residues.

It belongs to the glycosyltransferase 8 family. As to expression, expressed in siliques and seeds.

The protein localises to the golgi apparatus membrane. The protein operates within glycan metabolism; pectin biosynthesis. Its function is as follows. Probable glycosyltransferase involved in pectin and/or xylans biosynthesis in cell walls. Together with IRX14, required for xylan and pectin synthesis in seed coat epidermal (SCE) cells. Collaboratively with GAUT11, essential for the accumulation of seed mucilage, a gelatinous wall rich in unbranched rhamnogalacturonan I (RG I), and for shaping the surface morphology of seeds. The chain is Probable hexosyltransferase MUCI70 from Arabidopsis thaliana (Mouse-ear cress).